The sequence spans 147 residues: Ribonuclease 4 (147 aa).

The N-terminal stretch at 1-28 is a signal peptide; sequence MALQRTHSLLLLLLLTLLGLGLVQPSYG. Residue glutamine 29 is modified to Pyrrolidone carboxylic acid. Positions 35, 40, 68, 71, and 72 each coordinate dUMP. Histidine 40 (proton acceptor) is an active-site residue. 4 cysteine pairs are disulfide-bonded: cysteine 53–cysteine 109, cysteine 67–cysteine 120, cysteine 85–cysteine 135, and cysteine 92–cysteine 99. Residue histidine 144 is the Proton donor of the active site. Phenylalanine 145 lines the dUMP pocket.

The protein belongs to the pancreatic ribonuclease family.

The protein resides in the secreted. In terms of biological role, cleaves preferentially after uridine bases. Has antimicrobial activity against uropathogenic E.coli (UPEC). Probably contributes to urinary tract sterility. The protein is Ribonuclease 4 (RNASE4) of Pan troglodytes (Chimpanzee).